A 477-amino-acid chain; its full sequence is MTRIAITGGRVLTMDPERRVLEPGTVVVEDQFIAQVGSPTTSTSAAPKSSTPPGWQCSPASSTPTPTSHKSSSGVVHPMTATSSNGCTTCSIPASLPTQTTTSESEHCCTAPKPFVLASPLSSTTRTSDPTTSPAPGPPGSPFTDAGIRAIYARMYFDAPRAELEELVATIHAKAPGAVRMDESASTDHVLADLDQLITRHDRTADGRIRVWPAPAIPFMVSEKGMKAAQEIAASRTDGWTMHVSEDPIEARVHSMNAPEYLHHLGCLDDRLLAAHCVHIDSRDIRLFRQHDVKISTQPVSNSYLAAGIAPVPEMLAHGVTVGIGTDDANCNDSVNLISDMKVLALIHRAAHRDASIITPEKIIEMATIDGARCIGMADQIGSLEAGKRADIITLDLRHAQTTPAHDLAATIVFQAYGNEVNDVLVNGSVVMRDRVLSFLPTPQEEKALYDDASERSAAMLARAGLTGTRTWQTLGS.

Composition is skewed to low complexity over residues 38 to 73 (SPTT…KSSS) and 120 to 132 (PLSS…DPTT). Disordered regions lie at residues 38-77 (SPTT…GVVH) and 120-143 (PLSS…GSPF).

It belongs to the metallo-dependent hydrolases superfamily. ATZ/TRZ family.

It participates in xenobiotic degradation; melamine degradation. Its function is as follows. Hydrolytic deamination of the S-triazine substrate melamine. The protein is S-triazine hydrolase (trzA) of Gordonia rubripertincta (Rhodococcus corallinus).